The sequence spans 218 residues: Putative copper transporter crmD (218 aa).

The next 2 membrane-spanning stretches (helical) occupy residues 37–57 (YSLT…LGVL) and 176–196 (MLAV…GIVV).

This sequence belongs to the copper transporter (Ctr) (TC 1.A.56) family. SLC31A subfamily.

It is found in the membrane. The enzyme catalyses Cu(2+)(in) = Cu(2+)(out). Its function is as follows. Putative copper transporter; part of the crm gene cluster that mediates the biosynthesis of a yet unidentified copper-responsive metabolite. Probably involved in the transport of copper, even if it does not act as a major copper transporter. In contrast to crmA, is not involved in the biosynthesis of fumivalines or fumicicolins. This is Putative copper transporter crmD from Aspergillus fumigatus (strain ATCC MYA-4609 / CBS 101355 / FGSC A1100 / Af293) (Neosartorya fumigata).